The following is a 238-amino-acid chain: Cysteine-rich venom protein pseudechetoxin-like (238 aa).

An N-terminal signal peptide occupies residues 1 to 19 (MIAFIVLLSLAAVLQQSSG). The propeptide occupies 20–28 (TVDFASESS). One can recognise an SCP domain in the interval 38-164 (VDKHNALRRS…STKYLYVCQY (127 aa)). Intrachain disulfides connect cysteine 75–cysteine 153, cysteine 92–cysteine 165, cysteine 148–cysteine 162, cysteine 184–cysteine 191, cysteine 187–cysteine 196, cysteine 200–cysteine 233, cysteine 209–cysteine 227, and cysteine 218–cysteine 231. The ShKT domain occupies 200 to 233 (CKYEDDFSNCKALAKNSKCQTEWIKSKCPAACFC).

This sequence belongs to the CRISP family. In terms of tissue distribution, expressed by the venom gland.

It localises to the secreted. In terms of biological role, blocks olfactory (CNGA2) and retinal (CNGA1) CNG channel currents. Does not affect neither depolarization- nor caffeine-induced contraction of smooth muscle. The protein is Cysteine-rich venom protein pseudechetoxin-like of Notechis scutatus scutatus (Mainland tiger snake).